The sequence spans 252 residues: Ubiquinone biosynthesis O-methyltransferase (252 aa).

Residues R51, G70, D91, and M136 each contribute to the S-adenosyl-L-methionine site.

It belongs to the methyltransferase superfamily. UbiG/COQ3 family.

The catalysed reaction is a 3-demethylubiquinol + S-adenosyl-L-methionine = a ubiquinol + S-adenosyl-L-homocysteine + H(+). It catalyses the reaction a 3-(all-trans-polyprenyl)benzene-1,2-diol + S-adenosyl-L-methionine = a 2-methoxy-6-(all-trans-polyprenyl)phenol + S-adenosyl-L-homocysteine + H(+). It functions in the pathway cofactor biosynthesis; ubiquinone biosynthesis. Its function is as follows. O-methyltransferase that catalyzes the 2 O-methylation steps in the ubiquinone biosynthetic pathway. The sequence is that of Ubiquinone biosynthesis O-methyltransferase from Albidiferax ferrireducens (strain ATCC BAA-621 / DSM 15236 / T118) (Rhodoferax ferrireducens).